The sequence spans 126 residues: Putative gene 48 protein (126 aa).

In Bacillus phage SP01 (Bacteriophage SP01), this protein is Putative gene 48 protein (48).